The chain runs to 38 residues: Large ribosomal subunit protein bL36c (38 aa).

Belongs to the bacterial ribosomal protein bL36 family.

The protein localises to the plastid. It is found in the apicoplast. The sequence is that of Large ribosomal subunit protein bL36c (rpl36) from Theileria parva (East coast fever infection agent).